The following is a 138-amino-acid chain: Transcription antitermination protein NusB (138 aa).

Belongs to the NusB family.

Functionally, involved in transcription antitermination. Required for transcription of ribosomal RNA (rRNA) genes. Binds specifically to the boxA antiterminator sequence of the ribosomal RNA (rrn) operons. This is Transcription antitermination protein NusB from Geobacter sulfurreducens (strain ATCC 51573 / DSM 12127 / PCA).